A 103-amino-acid polypeptide reads, in one-letter code: Pyrimidine/purine nucleoside phosphorylase (103 aa).

This sequence belongs to the nucleoside phosphorylase PpnP family.

The catalysed reaction is a purine D-ribonucleoside + phosphate = a purine nucleobase + alpha-D-ribose 1-phosphate. It catalyses the reaction adenosine + phosphate = alpha-D-ribose 1-phosphate + adenine. The enzyme catalyses cytidine + phosphate = cytosine + alpha-D-ribose 1-phosphate. It carries out the reaction guanosine + phosphate = alpha-D-ribose 1-phosphate + guanine. The catalysed reaction is inosine + phosphate = alpha-D-ribose 1-phosphate + hypoxanthine. It catalyses the reaction thymidine + phosphate = 2-deoxy-alpha-D-ribose 1-phosphate + thymine. The enzyme catalyses uridine + phosphate = alpha-D-ribose 1-phosphate + uracil. It carries out the reaction xanthosine + phosphate = alpha-D-ribose 1-phosphate + xanthine. Functionally, catalyzes the phosphorolysis of diverse nucleosides, yielding D-ribose 1-phosphate and the respective free bases. Can use uridine, adenosine, guanosine, cytidine, thymidine, inosine and xanthosine as substrates. Also catalyzes the reverse reactions. The sequence is that of Pyrimidine/purine nucleoside phosphorylase from Methylobacillus flagellatus (strain ATCC 51484 / DSM 6875 / VKM B-1610 / KT).